The sequence spans 147 residues: Large ribosomal subunit protein uL11 (147 aa).

The protein belongs to the universal ribosomal protein uL11 family. In terms of assembly, part of the ribosomal stalk of the 50S ribosomal subunit. Interacts with L10 and the large rRNA to form the base of the stalk. L10 forms an elongated spine to which L12 dimers bind in a sequential fashion forming a multimeric L10(L12)X complex. One or more lysine residues are methylated.

Functionally, forms part of the ribosomal stalk which helps the ribosome interact with GTP-bound translation factors. The polypeptide is Large ribosomal subunit protein uL11 (Phocaeicola vulgatus (strain ATCC 8482 / DSM 1447 / JCM 5826 / CCUG 4940 / NBRC 14291 / NCTC 11154) (Bacteroides vulgatus)).